The following is a 105-amino-acid chain: Thioredoxin (105 aa).

The Thioredoxin domain occupies 1–105 (MFELDKDTFE…NVEAMVKKYI (105 aa)). Residues Cys29 and Cys32 are joined by a disulfide bond.

The protein belongs to the thioredoxin family.

Functionally, participates in various redox reactions through the reversible oxidation of its active center dithiol to a disulfide and catalyzes dithiol-disulfide exchange reactions. This is Thioredoxin (trxA) from Acetoanaerobium sticklandii (strain ATCC 12662 / DSM 519 / JCM 1433 / CCUG 9281 / NCIMB 10654 / HF) (Clostridium sticklandii).